A 318-amino-acid polypeptide reads, in one-letter code: MVFFPHRHLIGIKGLTEQDITYLLDKADEAVKISRRREKKTSTLRGLTQINLFFEASTRTQASFELAGKRLGADVMNMSVGNSSVKKGETLIDTAMTLNAMRPDVLVIRHSSAGAAALLAQKVSCSVVNAGDGQHEHPTQALLDALTIRRAKGKLSRIIVAICGDVLHSRVARSNILLLNAMGARVRVVAPATLLPAGIAEMGVEVFHSMKEGLKDADVVMMLRLQRERMSGAFVPSVREYYHFYGLDAETLKAAKDDALVMHPGPMNRGVEIASEVADGPQSVIAEQVEMGVAVRMAVMETLLVSQNQGPRTDGMMA.

Residues arginine 59 and threonine 60 each coordinate carbamoyl phosphate. Residue lysine 87 coordinates L-aspartate. Positions 109, 137, and 140 each coordinate carbamoyl phosphate. Positions 170 and 224 each coordinate L-aspartate. Residues glycine 265 and proline 266 each contribute to the carbamoyl phosphate site.

Belongs to the aspartate/ornithine carbamoyltransferase superfamily. ATCase family. As to quaternary structure, heterododecamer (2C3:3R2) of six catalytic PyrB chains organized as two trimers (C3), and six regulatory PyrI chains organized as three dimers (R2).

It carries out the reaction carbamoyl phosphate + L-aspartate = N-carbamoyl-L-aspartate + phosphate + H(+). It participates in pyrimidine metabolism; UMP biosynthesis via de novo pathway; (S)-dihydroorotate from bicarbonate: step 2/3. In terms of biological role, catalyzes the condensation of carbamoyl phosphate and aspartate to form carbamoyl aspartate and inorganic phosphate, the committed step in the de novo pyrimidine nucleotide biosynthesis pathway. In Rhizobium etli (strain ATCC 51251 / DSM 11541 / JCM 21823 / NBRC 15573 / CFN 42), this protein is Aspartate carbamoyltransferase catalytic subunit.